Consider the following 99-residue polypeptide: Cysteine-rich C-terminal protein 1 (99 aa).

2 disordered regions span residues 1 to 42 and 65 to 99; these read MSSQ…CCGS and RRRR…CSGC. Residues 22–32 are compositionally biased toward pro residues; that stretch reads APCPAPAPTPA. Low complexity predominate over residues 83–99; it reads QRSQRSNNRSSGCCSGC.

The sequence is that of Cysteine-rich C-terminal protein 1 (CRCT1) from Homo sapiens (Human).